Here is a 532-residue protein sequence, read N- to C-terminus: Glucan synthesis regulatory protein (532 aa).

The segment at 374 to 532 is disordered; sequence TANKRKSMAP…DAEDMKDIEI (159 aa). The segment covering 381-393 has biased composition (low complexity); the sequence is MAPSMASASGMRS. Positions 447–457 are enriched in polar residues; that stretch reads PTTSLTASNAS. Residues 475–516 show a composition bias toward basic and acidic residues; that stretch reads SGEHSKEDIKVNEDSPAKERTSEDKEKKPETEANGKATESKG.

This sequence belongs to the KNR4/SMI1 family.

Functionally, involved in the regulation of 1,3-beta-glucan synthase activity and cell-wall formation. This Neurospora crassa (strain ATCC 24698 / 74-OR23-1A / CBS 708.71 / DSM 1257 / FGSC 987) protein is Glucan synthesis regulatory protein (cot-2).